The following is a 263-amino-acid chain: Phosphatidylglycerol--prolipoprotein diacylglyceryl transferase (263 aa).

4 helical membrane passes run 6–26, 50–70, 85–105, and 112–132; these read VIFS…VLGI, LLTA…VLIY, TWEG…AVII, and IPIF…LLLG. Arginine 133 is an a 1,2-diacyl-sn-glycero-3-phospho-(1'-sn-glycerol) binding site. 3 consecutive transmembrane segments (helical) span residues 169-189, 197-217, and 233-253; these read LYEA…LFYL, GATT…VEFF, and MGQL…LGAL.

Belongs to the Lgt family.

It is found in the cell membrane. The enzyme catalyses L-cysteinyl-[prolipoprotein] + a 1,2-diacyl-sn-glycero-3-phospho-(1'-sn-glycerol) = an S-1,2-diacyl-sn-glyceryl-L-cysteinyl-[prolipoprotein] + sn-glycerol 1-phosphate + H(+). The protein operates within protein modification; lipoprotein biosynthesis (diacylglyceryl transfer). In terms of biological role, catalyzes the transfer of the diacylglyceryl group from phosphatidylglycerol to the sulfhydryl group of the N-terminal cysteine of a prolipoprotein, the first step in the formation of mature lipoproteins. The sequence is that of Phosphatidylglycerol--prolipoprotein diacylglyceryl transferase from Wolbachia pipientis subsp. Culex pipiens (strain wPip).